Here is a 293-residue protein sequence, read N- to C-terminus: Small ribosomal subunit biogenesis GTPase RsgA (293 aa).

Positions 63–223 (KNELVRPPIA…VADTPGFSSL (161 aa)) constitute a CP-type G domain. GTP contacts are provided by residues 112 to 115 (SKMD) and 166 to 174 (GQSGVGKSS). Cys247, Cys252, His254, and Cys260 together coordinate Zn(2+).

This sequence belongs to the TRAFAC class YlqF/YawG GTPase family. RsgA subfamily. Monomer. Associates with 30S ribosomal subunit, binds 16S rRNA. Zn(2+) serves as cofactor.

It is found in the cytoplasm. Its function is as follows. One of several proteins that assist in the late maturation steps of the functional core of the 30S ribosomal subunit. Helps release RbfA from mature subunits. May play a role in the assembly of ribosomal proteins into the subunit. Circularly permuted GTPase that catalyzes slow GTP hydrolysis, GTPase activity is stimulated by the 30S ribosomal subunit. The protein is Small ribosomal subunit biogenesis GTPase RsgA of Bacillus cytotoxicus (strain DSM 22905 / CIP 110041 / 391-98 / NVH 391-98).